The chain runs to 120 residues: MFLLYEYDIFWAFLIISSLIPILAFLISGVLAPISEGPEKLSSYESGIEPMGDAWLQFRIRYYMFALVFVVFDVETVFLYPWAMSFDVLGVSVFIEALIFVLIPIIGSVYAWRKGALEWS.

Transmembrane regions (helical) follow at residues 9-29 (IFWA…LISG), 64-84 (MFAL…PWAM), and 88-108 (VLGV…IIGS).

This sequence belongs to the complex I subunit 3 family. In terms of assembly, NDH is composed of at least 16 different subunits, 5 of which are encoded in the nucleus.

It is found in the plastid. The protein resides in the chloroplast thylakoid membrane. The catalysed reaction is a plastoquinone + NADH + (n+1) H(+)(in) = a plastoquinol + NAD(+) + n H(+)(out). The enzyme catalyses a plastoquinone + NADPH + (n+1) H(+)(in) = a plastoquinol + NADP(+) + n H(+)(out). In terms of biological role, NDH shuttles electrons from NAD(P)H:plastoquinone, via FMN and iron-sulfur (Fe-S) centers, to quinones in the photosynthetic chain and possibly in a chloroplast respiratory chain. The immediate electron acceptor for the enzyme in this species is believed to be plastoquinone. Couples the redox reaction to proton translocation, and thus conserves the redox energy in a proton gradient. The chain is NAD(P)H-quinone oxidoreductase subunit 3, chloroplastic from Drimys granadensis.